Reading from the N-terminus, the 660-residue chain is MGLQTTKWPSHGAFFLKSWLIISLGLYSQVSKLLACPSVCRCDRNFVYCNERSLTSVPLGIPEGVTVLYLHNNQINNAGFPAELHNVQSVHTVYLYGNQLDEFPMNLPKNVRVLHLQENNIQTISRAALAQLLKLEELHLDDNSISTVGVEDGAFREAISLKLLFLSKNHLSSVPVGLPVDLQELRVDENRIAVISDMAFQNLTSLERLIVDGNLLTNKGIAEGTFSHLTKLKEFSIVRNSLSHPPPDLPGTHLIRLYLQDNQINHIPLTAFSNLRKLERLDISNNQLRMLTQGVFDNLSNLKQLTARNNPWFCDCSIKWVTEWLKYIPSSLNVRGFMCQGPEQVRGMAVRELNMNLLSCPTTTPGLPLFTPAPSTASPTTQPPTLSIPNPSRSYTPPTPTTSKLPTIPDWDGRERVTPPISERIQLSIHFVNDTSIQVSWLSLFTVMAYKLTWVKMGHSLVGGIVQERIVSGEKQHLSLVNLEPRSTYRICLVPLDAFNYRAVEDTICSEATTHASYLNNGSNTASSHEQTTSHSMGSPFLLAGLIGGAVIFVLVVLLSVFCWHMHKKGRYTSQKWKYNRGRRKDDYCEAGTKKDNSILEMTETSFQIVSLNNDQLLKGDFRLQPIYTPNGGINYTDCHIPNNMRYCNSSVPDLEHCHT.

Positions methionine 1–alanine 35 are cleaved as a signal peptide. Intrachain disulfides connect cysteine 36/cysteine 42 and cysteine 40/cysteine 49. The LRRNT domain occupies cysteine 36–glutamate 63. At cysteine 36–phenylalanine 541 the chain is on the extracellular side. 10 LRR repeats span residues glycine 64–histidine 85, serine 89–lysine 109, asparagine 110–glutamine 131, lysine 134–phenylalanine 155, serine 160–aspartate 181, leucine 182–asparagine 202, serine 205–threonine 225, lysine 231–threonine 252, histidine 253–asparagine 274, and lysine 277–asparagine 298. The N-linked (GlcNAc...) asparagine glycan is linked to asparagine 202. Asparagine 298 is a glycosylation site (N-linked (GlcNAc...) asparagine). The LRRCT domain maps to asparagine 310 to threonine 362. Cystine bridges form between cysteine 314–cysteine 339 and cysteine 316–cysteine 360. Over residues alanine 373–proline 409 the composition is skewed to low complexity. The interval alanine 373–glycine 413 is disordered. A Fibronectin type-III domain is found at proline 419–serine 517. Residues asparagine 433 and asparagine 521 are each glycosylated (N-linked (GlcNAc...) asparagine). A helical membrane pass occupies residues leucine 542–phenylalanine 562. The Cytoplasmic portion of the chain corresponds to cysteine 563 to threonine 660.

As to quaternary structure, self-associates (via leucine-rich repeats), giving rise to homooligomers. Interacts with FGFR1. Interacts with FGFR2. Interacts (via extracellular domain) with ADGRL1/LPHN1. Interacts (via extracellular domain) with ADGRL3 (via olfactomedin-like domain). Interacts (via extracellular domain) with UNC5D (via the first Ig-like domain). Can also interact (via extracellular domain) with UNC5B, but with much lower affinity. Interacts (via extracellular domain) with FN1. In terms of processing, N-glycosylated. Proteolytic cleavage in the juxtamembrane region gives rise to a soluble ectodomain. Cleavage is probably effected by a metalloprotease. Expressed in pancreas, skeletal muscle, brain, and heart.

Its subcellular location is the cell membrane. The protein resides in the endoplasmic reticulum membrane. The protein localises to the cell junction. It localises to the focal adhesion. It is found in the secreted. Its subcellular location is the extracellular space. The protein resides in the extracellular matrix. The protein localises to the microsome membrane. It localises to the synapse. It is found in the synaptosome. Functions in cell-cell adhesion, cell migration and axon guidance. Mediates cell-cell adhesion via its interactions with ADGRL3 and probably also other latrophilins that are expressed at the surface of adjacent cells. May play a role in the migration of cortical neurons during brain development via its interaction with UNC5D. Mediates axon growth cone collapse and plays a repulsive role in neuron guidance via its interaction with UNC5D, and possibly also other UNC-5 family members. Plays a role in fibroblast growth factor-mediated signaling cascades. Required for normal organization of the cardiac basement membrane during embryogenesis, and for normal embryonic epicardium and heart morphogenesis. This is Leucine-rich repeat transmembrane protein FLRT2 (FLRT2) from Homo sapiens (Human).